The chain runs to 556 residues: Oxygen-dependent choline dehydrogenase (556 aa).

FAD is bound at residue 6 to 35 (DYIIIGAGSAGNVLAARLTEDPGVTVLLLE). Residue His475 is the Proton acceptor of the active site.

Belongs to the GMC oxidoreductase family. Requires FAD as cofactor.

The enzyme catalyses choline + A = betaine aldehyde + AH2. It catalyses the reaction betaine aldehyde + NAD(+) + H2O = glycine betaine + NADH + 2 H(+). Its pathway is amine and polyamine biosynthesis; betaine biosynthesis via choline pathway; betaine aldehyde from choline (cytochrome c reductase route): step 1/1. Its function is as follows. Involved in the biosynthesis of the osmoprotectant glycine betaine. Catalyzes the oxidation of choline to betaine aldehyde and betaine aldehyde to glycine betaine at the same rate. This chain is Oxygen-dependent choline dehydrogenase, found in Xanthomonas euvesicatoria pv. vesicatoria (strain 85-10) (Xanthomonas campestris pv. vesicatoria).